Consider the following 101-residue polypeptide: Precursor of CEP6 (101 aa).

The first 26 residues, 1–26 (MKLSVYIILSILFISTVFYEIQFTEA), serve as a signal peptide directing secretion. The propeptide occupies 27–48 (RQLRKTDDQDHDDHHFTVGYTD). Residues 29–42 (LRKTDDQDHDDHHF) show a composition bias toward basic and acidic residues. A disordered region spans residues 29–101 (LRKTDDQDHD…HAVKNNEPNA (73 aa)). A hydroxyproline mark is found at Pro52, Pro55, and Pro59. Residues 64-77 (KMKENEENAGGYKD) constitute a propeptide that is removed on maturation. Residues 64–79 (KMKENEENAGGYKDDF) are compositionally biased toward basic and acidic residues. Hydroxyproline is present on residues Pro81, Pro84, and Pro88. Residues 93 to 101 (AVKNNEPNA) constitute a propeptide that is removed on maturation.

This sequence belongs to the C-terminally encoded plant signaling peptide (CEP) family. As to quaternary structure, interacts with CEP receptors (e.g. CEPR1 and CEPR2). The mature small signaling peptide is generated by proteolytic processing of the longer precursor. In terms of tissue distribution, expressed in lateral root primordia and in lateral roots excluding the meristem region. Also present in the aerial tissues, such as leaf petioles and the shoot apex region.

It localises to the secreted. The protein localises to the extracellular space. Its subcellular location is the apoplast. In terms of biological role, extracellular signaling peptide that represses primary root growth rate. Modulates leaf morphology. Regulates systemic nitrogen (N)-demand signaling. Mediates up-regulation of genes involved in N uptake and assimilation pathways. The protein is Precursor of CEP6 of Arabidopsis thaliana (Mouse-ear cress).